Here is a 331-residue protein sequence, read N- to C-terminus: Bifunctional nuclease 1 (331 aa).

One can recognise a BFN domain in the interval 126-261; that stretch reads CVQNNPRVLR…RIAYNNGLKV (136 aa). Residues 291–326 form the UVR domain; it reads EAQEFDLVRNMLVAAVEERYKDAAQYRDQLFMFRAK.

It belongs to the bifunctional nuclease family.

The protein resides in the nucleus. Bifunctional nuclease with both RNase and DNase activities. Involved in basal defense response. Participates in abscisic acid-derived callose deposition following infection by a necrotrophic pathogen. The sequence is that of Bifunctional nuclease 1 (BBD1) from Oryza sativa subsp. japonica (Rice).